Consider the following 207-residue polypeptide: Dephospho-CoA kinase (207 aa).

A DPCK domain is found at 10 to 207 (ILGLTGGIGS…FYLTLKGGQP (198 aa)). 18–23 (GSGKSA) serves as a coordination point for ATP.

Belongs to the CoaE family.

It localises to the cytoplasm. The enzyme catalyses 3'-dephospho-CoA + ATP = ADP + CoA + H(+). Its pathway is cofactor biosynthesis; coenzyme A biosynthesis; CoA from (R)-pantothenate: step 5/5. Catalyzes the phosphorylation of the 3'-hydroxyl group of dephosphocoenzyme A to form coenzyme A. The protein is Dephospho-CoA kinase of Pseudomonas putida (strain ATCC 47054 / DSM 6125 / CFBP 8728 / NCIMB 11950 / KT2440).